The primary structure comprises 266 residues: MKAALLTLAVLFLTGSQARHFWQQDEPQSPWDRVKDLATVYVDAVKDSGRDYVAQFEASALGKQLNLKLLDNWDSLSSTVTKLREQIGPVTQEFWDNLEKETEVLRQEMSKDLEEVKQKVQPYLDDFQKKWQEEVELYRQKVAPLGSELREGARQKLQELQEKLSPLAEELRDRARTHVDALRAQLAPYSDDLRERLAARLEALKEGGGASLAEYHARASEQLSALGEKARPALEDLRQGLLPVLESFKVSLLAAIDEATKKLNAQ.

A signal peptide spans Met-1 to Ala-18. A run of 2 repeats spans residues Leu-67 to Gly-88 and Pro-89 to Ser-110. The tract at residues Leu-67–Gln-266 is 10 X approximate tandem repeats. Met-109 carries the post-translational modification Methionine sulfoxide. The stretch at Lys-111–Gln-121 is one 3; half-length repeat. Tandem repeats lie at residues Pro-122–Ala-143, Pro-144–Ser-165, Pro-166–Ala-187, Pro-188–Gly-209, and Ala-210–Arg-231. A 9; half-length repeat occupies Pro-232–Leu-242. Repeat unit 10 spans residues Pro-243–Gln-266.

Belongs to the apolipoprotein A1/A4/E family. In terms of assembly, homodimer. Interacts with APOA1BP and CLU. Component of a sperm activating protein complex (SPAP), consisting of APOA1, an immunoglobulin heavy chain, an immunoglobulin light chain and albumin. Interacts with NDRG1. Interacts with SCGB3A2. Interacts with NAXE and YJEFN3. Palmitoylated. Post-translationally, glycosylated. In terms of processing, phosphorylation sites are present in the extracellular medium. As to expression, major protein of plasma HDL, also found in chylomicrons. Synthesized in the liver and small intestine.

Its subcellular location is the secreted. Participates in the reverse transport of cholesterol from tissues to the liver for excretion by promoting cholesterol efflux from tissues and by acting as a cofactor for the lecithin cholesterol acyltransferase (LCAT). As part of the SPAP complex, activates spermatozoa motility. This is Apolipoprotein A-I (APOA1) from Canis lupus familiaris (Dog).